We begin with the raw amino-acid sequence, 280 residues long: Diaminopimelate epimerase (280 aa).

The substrate site is built by Asn11 and Asn62. Cys71 acts as the Proton donor in catalysis. Substrate contacts are provided by residues 72–73 (GN), Asn160, Asn193, and 211–212 (ER). The active-site Proton acceptor is Cys220. 221–222 (GT) is a binding site for substrate.

This sequence belongs to the diaminopimelate epimerase family. In terms of assembly, homodimer.

The protein resides in the cytoplasm. It carries out the reaction (2S,6S)-2,6-diaminopimelate = meso-2,6-diaminopimelate. The protein operates within amino-acid biosynthesis; L-lysine biosynthesis via DAP pathway; DL-2,6-diaminopimelate from LL-2,6-diaminopimelate: step 1/1. Functionally, catalyzes the stereoinversion of LL-2,6-diaminopimelate (L,L-DAP) to meso-diaminopimelate (meso-DAP), a precursor of L-lysine and an essential component of the bacterial peptidoglycan. The protein is Diaminopimelate epimerase of Acetivibrio thermocellus (strain ATCC 27405 / DSM 1237 / JCM 9322 / NBRC 103400 / NCIMB 10682 / NRRL B-4536 / VPI 7372) (Clostridium thermocellum).